A 214-amino-acid polypeptide reads, in one-letter code: Redox-sensing transcriptional repressor Rex (214 aa).

Residues 17-56 (LYYRIFKRFYADQVEKASSKQIADAMGIDSATVRRDFSYF) constitute a DNA-binding region (H-T-H motif). 91–96 (GCGNIG) is an NAD(+) binding site.

Belongs to the transcriptional regulatory Rex family. In terms of assembly, homodimer.

The protein resides in the cytoplasm. In terms of biological role, modulates transcription in response to changes in cellular NADH/NAD(+) redox state. This Streptococcus equi subsp. zooepidemicus (strain H70) protein is Redox-sensing transcriptional repressor Rex.